The sequence spans 381 residues: cAMP-dependent protein kinase type I-beta regulatory subunit (381 aa).

The segment at 2–136 (ASPPACPSEE…ALAKAISKNV (135 aa)) is dimerization and phosphorylation. Phosphoserine is present on Ser-3. Tyr-21 carries the post-translational modification 3'-nitrotyrosine. The disordered stretch occupies residues 67–98 (ARQKSNSQSDSHDEEVSPTPPNPVVKARRRRG). Phosphoserine is present on residues Ser-77 and Ser-83. At Thr-85 the chain carries Phosphothreonine. A Pseudophosphorylation motif motif is present at residues 96–100 (RRGGV). An Omega-N-methylarginine modification is found at Arg-97. Residues 137–254 (LFAH…SKVS), Glu-202, Arg-211, 255–381 (ILES…SLTV), Glu-326, and Arg-335 each bind 3',5'-cyclic AMP.

This sequence belongs to the cAMP-dependent kinase regulatory chain family. As to quaternary structure, the inactive holoenzyme is composed of two regulatory chains and two catalytic chains. Activation by cAMP releases the two active catalytic monomers and the regulatory dimer. Interacts with PRKX; regulates this cAMP-dependent protein kinase. Interacts with C2orf88/smAKAP; this interaction may target PRKAR1B to the plasma membrane. Post-translationally, the pseudophosphorylation site binds to the substrate-binding region of the catalytic chain, resulting in the inhibition of its activity. In terms of tissue distribution, four types of regulatory chains are found: I-alpha, I-beta, II-alpha, and II-beta. Their expression varies among tissues and is in some cases constitutive and in others inducible.

The protein localises to the cell membrane. In terms of biological role, regulatory subunit of the cAMP-dependent protein kinases involved in cAMP signaling in cells. The polypeptide is cAMP-dependent protein kinase type I-beta regulatory subunit (PRKAR1B) (Homo sapiens (Human)).